Here is a 394-residue protein sequence, read N- to C-terminus: Elongation factor Tu (394 aa).

The 195-residue stretch at 10-204 (KPHVNVGTIG…YLDSYIPEPE (195 aa)) folds into the tr-type G domain. The interval 19 to 26 (GHVDHGKT) is G1. 19-26 (GHVDHGKT) contacts GTP. Residue threonine 26 coordinates Mg(2+). The segment at 60-64 (GITIN) is G2. The tract at residues 81–84 (DCPG) is G3. Residues 81–85 (DCPGH) and 136–139 (NKCD) contribute to the GTP site. The G4 stretch occupies residues 136 to 139 (NKCD). Residues 174 to 176 (SAL) are G5.

Belongs to the TRAFAC class translation factor GTPase superfamily. Classic translation factor GTPase family. EF-Tu/EF-1A subfamily. As to quaternary structure, monomer.

It is found in the cytoplasm. The enzyme catalyses GTP + H2O = GDP + phosphate + H(+). Its function is as follows. GTP hydrolase that promotes the GTP-dependent binding of aminoacyl-tRNA to the A-site of ribosomes during protein biosynthesis. The protein is Elongation factor Tu of Enterobacter sp. (strain 638).